Reading from the N-terminus, the 484-residue chain is Alkaline nuclease (484 aa).

The protein belongs to the herpesviridae alkaline nuclease family. As to quaternary structure, interacts with major DNA-binding protein; this interaction increases the nuclease processivity of the alkaline exonuclease.

The protein localises to the host nucleus. Its subcellular location is the host cytoplasm. In terms of biological role, plays a role in processing non linear or branched viral DNA intermediates in order to promote the production of mature packaged unit-length linear progeny viral DNA molecules. Exhibits endonuclease and exonuclease activities and accepts both double-stranded and single-stranded DNA as substrate. Exonuclease digestion of DNA is in the 5'-&gt; 3' direction and the products are 5'-monophosphate nucleosides. Additionally, forms a recombinase with the major DNA-binding protein, which displays strand exchange activity. This is Alkaline nuclease from Elephas maximus (Indian elephant).